A 280-amino-acid polypeptide reads, in one-letter code: Protein MGF 505-3R (280 aa).

The protein belongs to the asfivirus MGF 505 family.

Plays a role in virus cell tropism, and may be required for efficient virus replication in macrophages. The polypeptide is Protein MGF 505-3R (African swine fever virus (isolate Warthog/Namibia/Wart80/1980) (ASFV)).